The following is a 145-amino-acid chain: Large ribosomal subunit protein bL9 (145 aa).

Belongs to the bacterial ribosomal protein bL9 family.

Functionally, binds to the 23S rRNA. In Mesomycoplasma hyopneumoniae (strain 232) (Mycoplasma hyopneumoniae), this protein is Large ribosomal subunit protein bL9.